We begin with the raw amino-acid sequence, 110 residues long: Keratin, type II cytoskeletal 8 (110 aa).

Residues 1 to 12 (MSTSGPRAFSSR) form a head region. Residues 1 to 110 (MSTSGPRAFS…LDIEIATYRK (110 aa)) form the IF rod domain. Phosphoserine occurs at positions 2, 4, 10, and 11. Residue Arg-12 is modified to Omega-N-methylarginine. A coil 1A region spans residues 13–25 (FASFIDKVRWSLL). Positions 26–39 (QQQKSNMDNMFESY) are linker 1. Residue Lys-29 forms a Glycyl lysine isopeptide (Lys-Gly) (interchain with G-Cter in SUMO2) linkage. Residues 40-79 (INNLRDVDEAYMNKVELESRLEGLTDEINFLRQIHEEEIR) form a coil 1B region. N6-acetyllysine is present on Lys-53. 2 positions are modified to phosphoserine: Ser-80 and Ser-85. The interval 80 to 86 (SLDMDSI) is linker 12. The segment at 87–110 (IAEVRHGDDLRRLALDIEIATYRK) is coil 2. The interval 88–99 (AEVRHGDDLRRL) is necessary for interaction with PNN. Lys-110 participates in a covalent cross-link: Glycyl lysine isopeptide (Lys-Gly) (interchain with G-Cter in SUMO2).

Belongs to the intermediate filament family. As to quaternary structure, heterotetramer of two type I and two type II keratins. Forms a heterodimer with KRT18. Associates with KRT20. Interacts with PNN. When associated with KRT19, interacts with DMD. Interacts with TCHP. Interacts with APEX1. Interacts with GPER1. Interacts with EPPK1. Interacts with PKP1 and PKP2. In terms of processing, O-glycosylated. O-GlcNAcylation at multiple sites increases solubility, and decreases stability by inducing proteasomal degradation. O-glycosylated (O-GlcNAcylated), in a cell cycle-dependent manner.

The protein localises to the cytoplasm. The protein resides in the nucleus. It localises to the nucleoplasm. Its subcellular location is the nucleus matrix. Its function is as follows. Together with KRT19, helps to link the contractile apparatus to dystrophin at the costameres of striated muscle. The chain is Keratin, type II cytoskeletal 8 from Mesocricetus auratus (Golden hamster).